Here is a 413-residue protein sequence, read N- to C-terminus: cAMP-dependent protein kinase regulatory subunit (413 aa).

Residues 1–145 are disordered; it reads MADSSSFPGT…DSWTPPCHPK (145 aa). Residues 24 to 161 form a dimerization and phosphorylation region; that stretch reads SPIQKISEEE…RLKTAVSNNF (138 aa). Over residues 58 to 67 the composition is skewed to low complexity; the sequence is GNSFNGDNGS. Positions 121 to 138 are enriched in polar residues; sequence TSVSAESLNPTSAGSDSW. Serine 122 carries the phosphoserine modification. Residues 162-291, glutamate 240, arginine 249, 294-413, glutamate 361, and arginine 370 contribute to the 3',5'-cyclic AMP site; these read LFSH…FLEE and LLSS…PSPS.

Belongs to the cAMP-dependent kinase regulatory chain family. In terms of assembly, tetramer, composed of 2 regulatory (R) and 2 catalytic (C) subunits. In the presence of cAMP it dissociates into 2 active monomeric C subunits and an R dimer.

This Aspergillus fumigatus (strain ATCC MYA-4609 / CBS 101355 / FGSC A1100 / Af293) (Neosartorya fumigata) protein is cAMP-dependent protein kinase regulatory subunit (pkaR).